A 356-amino-acid polypeptide reads, in one-letter code: Tyrosine recombinase XerS (356 aa).

The Core-binding (CB) domain maps to 16–121; sequence IMPWYVLDYY…ALSSLYKYLT (106 aa). In terms of domain architecture, Tyr recombinase spans 169–354; the sequence is AFLDYVDKEY…VNDEQKNALD (186 aa). Active-site residues include Arg-210, Lys-234, His-306, Arg-309, and His-332. Tyr-341 acts as the O-(3'-phospho-DNA)-tyrosine intermediate in catalysis.

Belongs to the 'phage' integrase family. XerS subfamily.

The protein resides in the cytoplasm. Its activity is regulated as follows. FtsK is required for recombination. In terms of biological role, site-specific tyrosine recombinase, which acts by catalyzing the cutting and rejoining of the recombining DNA molecules. Essential to convert dimers of the bacterial chromosome into monomers to permit their segregation at cell division. This is Tyrosine recombinase XerS from Streptococcus equi subsp. zooepidemicus (strain H70).